The sequence spans 488 residues: Coagulation factor X (488 aa).

Residues 1–31 (MGRPLHLVLLSASLAGLLLLGESLFIRREQA) form the signal peptide. The propeptide occupies 32 to 40 (NNILARVTR). The Gla domain maps to 41–85 (ANSFLEEMKKGHLERECMEETCSYEEAREVFEDSDKTNEFWNKYK). A 4-carboxyglutamate mark is found at glutamate 46, glutamate 47, glutamate 54, glutamate 56, glutamate 59, glutamate 60, glutamate 65, glutamate 66, glutamate 69, glutamate 72, and glutamate 79. Cysteine 57 and cysteine 62 are oxidised to a cystine. The EGF-like 1; calcium-binding domain maps to 86–122 (DGDQCETSPCQNQGKCKDGLGEYTCTCLEGFEGKNCE). 11 cysteine pairs are disulfide-bonded: cysteine 90–cysteine 101, cysteine 95–cysteine 110, cysteine 112–cysteine 121, cysteine 129–cysteine 140, cysteine 136–cysteine 149, cysteine 151–cysteine 164, cysteine 172–cysteine 342, cysteine 241–cysteine 246, cysteine 261–cysteine 277, cysteine 390–cysteine 404, and cysteine 415–cysteine 443. At aspartate 103 the chain carries (3R)-3-hydroxyaspartate. An EGF-like 2 domain is found at 125 to 165 (TRKLCSLDNGDCDQFCHEEQNSVVCSCARGYTLADNGKACI). Residues 183–203 (SVAQATSSSGEAPDSITWKPY) are O-glycosylated at one site. Residues 183-234 (SVAQATSSSGEAPDSITWKPYDAADLDPTENPFDLLDFNQTQPERGDNNLTR) constitute a propeptide, activation peptide. Threonine 199 and threonine 211 each carry an O-linked (GalNAc...) threonine glycan. Residues asparagine 221 and asparagine 231 are each glycosylated (N-linked (GlcNAc...) asparagine). The Peptidase S1 domain maps to 235 to 467 (IVGGQECKDG…FLKWIDRSMK (233 aa)). Residues histidine 276 and aspartate 322 each act as charge relay system in the active site. Serine 419 acts as the Charge relay system in catalysis. An O-glycosylated at one site region spans residues 476-485 (SHAPEVITSS).

Belongs to the peptidase S1 family. As to quaternary structure, the two chains are formed from a single-chain precursor by the excision of two Arg residues and are held together by 1 or more disulfide bonds. Forms a heterodimer with SERPINA5. Interacts (inactive and activated) with ixolaris, an anticoagulant protein from Ixodes scapularis saliva. Interacts (activated) with iripin-8, a serine protease inhibitor from Ixodes ricinus saliva. Interacts (activated) with FXa-directed anticoagulant from Aedes albopictus saliva. Interacts (activated) with guianensin, an anticoagulant protein from Simulium guianense saliva. Interacts (activated) with simukunin, an anticoagulant protein from Simulium vittatum saliva. In terms of processing, the vitamin K-dependent, enzymatic carboxylation of some glutamate residues allows the modified protein to bind calcium. N- and O-glycosylated. O-glycosylated with core 1 or possibly core 8 glycans. Post-translationally, proteolytically cleaved and activated by cathepsin CTSG. The activation peptide is cleaved by factor IXa (in the intrinsic pathway), or by factor VIIa (in the extrinsic pathway). In terms of processing, the iron and 2-oxoglutarate dependent 3-hydroxylation of aspartate and asparagine is (R) stereospecific within EGF domains. In terms of tissue distribution, plasma; synthesized in the liver.

The protein resides in the secreted. The enzyme catalyses Selective cleavage of Arg-|-Thr and then Arg-|-Ile bonds in prothrombin to form thrombin.. Its activity is regulated as follows. Inhibited by SERPINA5 and SERPINA10. Factor Xa is a vitamin K-dependent glycoprotein that converts prothrombin to thrombin in the presence of factor Va, calcium and phospholipid during blood clotting. Factor Xa activates pro-inflammatory signaling pathways in a protease-activated receptor (PAR)-dependent manner. Up-regulates expression of protease-activated receptors (PARs) F2R, F2RL1 and F2RL2 in dermal microvascular endothelial cells. Triggers the production of pro-inflammatory cytokines, such as MCP-1/CCL2 and IL6, in cardiac fibroblasts and umbilical vein endothelial cells in PAR-1/F2R-dependent manner. Triggers the production of pro-inflammatory cytokines, such as MCP-1/CCL2, IL6, TNF-alpha/TNF, IL-1beta/IL1B, IL8/CXCL8 and IL18, in endothelial cells and atrial tissues. Induces expression of adhesion molecules, such as ICAM1, VCAM1 and SELE, in endothelial cells and atrial tissues. Increases expression of phosphorylated ERK1/2 in dermal microvascular endothelial cells and atrial tissues. Triggers activation of the transcription factor NF-kappa-B in dermal microvascular endothelial cells and atrial tissues. Activates pro-inflammatory and pro-fibrotic responses in dermal fibroblasts and enhances wound healing probably via PAR-2/F2RL1-dependent mechanism. Activates barrier protective signaling responses in endothelial cells in PAR-2/F2RL1-dependent manner; the activity depends on the cleavage of PAR-2/F2RL1 by factor Xa. Up-regulates expression of plasminogen activator inhibitor 1 (SERPINE1) in atrial tissues. This Homo sapiens (Human) protein is Coagulation factor X (F10).